Here is a 339-residue protein sequence, read N- to C-terminus: Protein-glutamate methylesterase/protein-glutamine glutaminase 2 (339 aa).

The Response regulatory domain occupies 2–119 (NIGIVNDLPL…GLSTDASPQA (118 aa)). At Asp-53 the chain carries 4-aspartylphosphate. The CheB-type methylesterase domain maps to 141 to 336 (PGPAPERGQP…PQLISRITRP (196 aa)). Active-site residues include Ser-158, His-185, and Asp-278.

It belongs to the CheB family. Post-translationally, phosphorylated by CheA. Phosphorylation of the N-terminal regulatory domain activates the methylesterase activity.

The protein resides in the cytoplasm. The catalysed reaction is [protein]-L-glutamate 5-O-methyl ester + H2O = L-glutamyl-[protein] + methanol + H(+). It carries out the reaction L-glutaminyl-[protein] + H2O = L-glutamyl-[protein] + NH4(+). Its function is as follows. Involved in chemotaxis. Part of a chemotaxis signal transduction system that modulates chemotaxis in response to various stimuli. Catalyzes the demethylation of specific methylglutamate residues introduced into the chemoreceptors (methyl-accepting chemotaxis proteins or MCP) by CheR. Also mediates the irreversible deamidation of specific glutamine residues to glutamic acid. The protein is Protein-glutamate methylesterase/protein-glutamine glutaminase 2 of Burkholderia lata (strain ATCC 17760 / DSM 23089 / LMG 22485 / NCIMB 9086 / R18194 / 383).